We begin with the raw amino-acid sequence, 266 residues long: Killer cell lectin-like receptor 6 (266 aa).

The Cytoplasmic segment spans residues 1-44; that stretch reads MSEPEVTYSTVRLHKSSRLQKLVRHEETQGPREAGYRKCSVCWQ. The helical; Signal-anchor for type II membrane protein transmembrane segment at 45 to 66 threads the bilayer; it reads LIVKALGILCFLLLITVAVLAV. Residues 67–266 are Extracellular-facing; the sequence is KIFQYGQHNQ…CGKKLDKFPH (200 aa). Residues Asn87 and Asn104 are each glycosylated (N-linked (GlcNAc...) asparagine). Positions 143 to 261 constitute a C-type lectin domain; the sequence is GVKYWFCYRT…SHYCICGKKL (119 aa). 4 disulfides stabilise this stretch: Cys149–Cys154, Cys167–Cys255, Cys171–Cys257, and Cys236–Cys249.

As to quaternary structure, homodimer; disulfide-linked.

It is found in the membrane. Its function is as follows. Receptor on natural killer (NK) cells for class I MHC. In Mus musculus (Mouse), this protein is Killer cell lectin-like receptor 6 (Klra6).